A 1377-amino-acid chain; its full sequence is DNA-directed RNA polymerase subunit beta (1377 aa).

It belongs to the RNA polymerase beta chain family. In terms of assembly, the RNAP catalytic core consists of 2 alpha, 1 beta, 1 beta' and 1 omega subunit. When a sigma factor is associated with the core the holoenzyme is formed, which can initiate transcription.

The catalysed reaction is RNA(n) + a ribonucleoside 5'-triphosphate = RNA(n+1) + diphosphate. Its function is as follows. DNA-dependent RNA polymerase catalyzes the transcription of DNA into RNA using the four ribonucleoside triphosphates as substrates. In Brucella canis (strain ATCC 23365 / NCTC 10854 / RM-666), this protein is DNA-directed RNA polymerase subunit beta.